A 126-amino-acid chain; its full sequence is Apolipoprotein C-IV (126 aa).

The first 27 residues, 1–27 (MSLLRHRLQALPSLCLCVLVLACIGAC), serve as a signal peptide directing secretion.

The protein belongs to the apolipoprotein C4 family.

The protein resides in the secreted. May participate in lipoprotein metabolism. This chain is Apolipoprotein C-IV (APOC4), found in Aotus nancymaae (Ma's night monkey).